The primary structure comprises 488 residues: Gamma-aminobutyric acid receptor subunit beta-4 (488 aa).

An N-terminal signal peptide occupies residues 1 to 25; the sequence is MWTFQADRLSGIVSALAALCVACCA. Residues 26-244 are Extracellular-facing; that stretch reads QSPSTGNISV…SFRIKRNIGY (219 aa). Residues N32, N104, N173, and N195 are each glycosylated (N-linked (GlcNAc...) asparagine). A disulfide bridge connects residues C160 and C174. Helical transmembrane passes span 245–266, 271–292, and 304–326; these read FILQ…SFWI, SAAR…NTHL, and AIDV…YAFV. Over 327-465 the chain is Cytoplasmic; that stretch reads NYIFFGRGPR…DLTDVSTIDK (139 aa). A helical transmembrane segment spans residues 466–487; the sequence is WSRIIFPITFGFFNLVYWLYYV.

Belongs to the ligand-gated ion channel (TC 1.A.9) family. Gamma-aminobutyric acid receptor (TC 1.A.9.5) subfamily. GABRB4 sub-subfamily. Generally pentameric. There are five types of GABA(A) receptor chains: alpha, beta, gamma, delta, and rho.

It localises to the postsynaptic cell membrane. Its subcellular location is the cell membrane. GABA, the major inhibitory neurotransmitter in the vertebrate brain, mediates neuronal inhibition by binding to the GABA/benzodiazepine receptor and opening an integral chloride channel. This chain is Gamma-aminobutyric acid receptor subunit beta-4 (GABRB4), found in Gallus gallus (Chicken).